The sequence spans 407 residues: Phosphopentomutase (407 aa).

Aspartate 10, aspartate 306, histidine 311, aspartate 347, histidine 348, and histidine 359 together coordinate Mn(2+).

The protein belongs to the phosphopentomutase family. Mn(2+) serves as cofactor.

The protein resides in the cytoplasm. It carries out the reaction 2-deoxy-alpha-D-ribose 1-phosphate = 2-deoxy-D-ribose 5-phosphate. The enzyme catalyses alpha-D-ribose 1-phosphate = D-ribose 5-phosphate. It participates in carbohydrate degradation; 2-deoxy-D-ribose 1-phosphate degradation; D-glyceraldehyde 3-phosphate and acetaldehyde from 2-deoxy-alpha-D-ribose 1-phosphate: step 1/2. Isomerase that catalyzes the conversion of deoxy-ribose 1-phosphate (dRib-1-P) and ribose 1-phosphate (Rib-1-P) to deoxy-ribose 5-phosphate (dRib-5-P) and ribose 5-phosphate (Rib-5-P), respectively. This Escherichia coli O127:H6 (strain E2348/69 / EPEC) protein is Phosphopentomutase.